We begin with the raw amino-acid sequence, 283 residues long: Protein-L-isoaspartate O-methyltransferase (283 aa).

Residue serine 122 is part of the active site.

This sequence belongs to the methyltransferase superfamily. L-isoaspartyl/D-aspartyl protein methyltransferase family.

The protein resides in the cytoplasm. The enzyme catalyses [protein]-L-isoaspartate + S-adenosyl-L-methionine = [protein]-L-isoaspartate alpha-methyl ester + S-adenosyl-L-homocysteine. Functionally, catalyzes the methyl esterification of L-isoaspartyl residues in peptides and proteins that result from spontaneous decomposition of normal L-aspartyl and L-asparaginyl residues. It plays a role in the repair and/or degradation of damaged proteins. The chain is Protein-L-isoaspartate O-methyltransferase from Leptothrix cholodnii (strain ATCC 51168 / LMG 8142 / SP-6) (Leptothrix discophora (strain SP-6)).